A 608-amino-acid chain; its full sequence is Sensor protein kinase WalK (608 aa).

Helical transmembrane passes span 14-34 and 183-203; these read LVIVYVLLIIIGMQIIGLYFT and IFIVGTAISLLITVILGFFIA. The 53-residue stretch at 204–256 folds into the HAMP domain; it reads RTITKPITDMRNQTVEMSRGNYTQRVKIYGNDEIGELALAFNNLSKRVQEAQA. One can recognise a PAS domain in the interval 261 to 331; sequence EKRRLDSVIT…EIQENNDSFL (71 aa). The Zn(2+) site is built by histidine 271, aspartate 274, histidine 364, and glutamate 368. A PAC domain is found at 314-378; it reads LEDEFKLEEI…QQQVERERRE (65 aa). The Histidine kinase domain maps to 382-600; sequence NVSHELRTPL…SIFITLPCEV (219 aa). Histidine 385 bears the Phosphohistidine; by autocatalysis mark.

In terms of assembly, forms homodimers. Forms homooligomers. Post-translationally, autophosphorylated.

It localises to the cell membrane. The enzyme catalyses ATP + protein L-histidine = ADP + protein N-phospho-L-histidine.. Its activity is regulated as follows. By zinc. Zinc-binding negatively regulates WalK kinase activity and thus autophosphorylation. Its function is as follows. Member of the two-component regulatory system WalK/WalR that regulates genes involved in cell wall metabolism, virulence regulation, biofilm production, oxidative stress resistance and antibiotic resistance via direct or indirect regulation of autolysins. Functions as a sensor protein kinase which is autophosphorylated at a histidine residue in the dimerization domain and transfers its phosphate group to the conserved aspartic acid residue in the regulatory domain of WalR. In turn, WalR binds to the upstream promoter regions of the target genes to positively and negatively regulate their expression. This Staphylococcus aureus (strain Newman) protein is Sensor protein kinase WalK (walK).